Here is a 398-residue protein sequence, read N- to C-terminus: Immunoglobulin heavy constant gamma 2A (398 aa).

Ig-like domains follow at residues 5–97, 120–219, and 228–324; these read PSVY…KKIE, PSVF…RTIS, and PQVY…KSFS. Disulfide bonds link C26–C81, C143–C203, and C249–C307. Residue N179 is glycosylated (N-linked (GlcNAc...) asparagine). The helical transmembrane segment at 345–362 threads the bilayer; the sequence is GLWTTITIFISLFLLSVC. The Cytoplasmic segment spans residues 363–398; sequence YSASVTLFKVKWIFSSVVELKQTISPDYRNMIGQGA.

It localises to the cell membrane. This is Immunoglobulin heavy constant gamma 2A from Mus musculus (Mouse).